We begin with the raw amino-acid sequence, 191 residues long: Probable ribosome biogenesis protein RLP24 (191 aa).

Ser136 carries the phosphoserine modification.

It belongs to the eukaryotic ribosomal protein eL24 family. In terms of assembly, associated with nucleolar and cytoplasmic pre-60S particles. At the end of biogenesis it dissociates from cytoplasmic pre-60S particles and is likely to be exchanged for its ribosomal homologue, RPL24.

Its subcellular location is the nucleus. The protein resides in the nucleolus. In terms of biological role, involved in the biogenesis of the 60S ribosomal subunit. Ensures the docking of NOG1 to pre-60S particles. This Drosophila melanogaster (Fruit fly) protein is Probable ribosome biogenesis protein RLP24 (RpL24-like).